The chain runs to 132 residues: Transmembrane protein 170B (132 aa).

Residues 1 to 37 (MRAEGADHSMINLSVQQVLSLWAHGTVLRNLTEMWYW) lie on the Extracellular side of the membrane. N-linked (GlcNAc...) asparagine glycosylation is present at Asn12. A helical membrane pass occupies residues 38 to 58 (IFLWALFSSLFVHGAAGVLMF). Residues 59 to 68 (VMLQRHRQGR) are Cytoplasmic-facing. The chain crosses the membrane as a helical span at residues 69–89 (VLSIIAVSIGFLASVTGAMIT). At 90-104 (SAAVAGIYRVAGKNM) the chain is on the extracellular side. A helical membrane pass occupies residues 105–125 (APLEALVWGVGQTVLTLIISF). The Cytoplasmic segment spans residues 126–132 (SRILATL).

Belongs to the TMEM170 family. In terms of assembly, interacts with CTNNB1.

Its subcellular location is the cell membrane. This chain is Transmembrane protein 170B (Tmem170b), found in Rattus norvegicus (Rat).